We begin with the raw amino-acid sequence, 569 residues long: Arginine--tRNA ligase (569 aa).

The 'HIGH' region motif lies at 123 to 133; that stretch reads ANPNGPLHVGH.

The protein belongs to the class-I aminoacyl-tRNA synthetase family.

It is found in the cytoplasm. It carries out the reaction tRNA(Arg) + L-arginine + ATP = L-arginyl-tRNA(Arg) + AMP + diphosphate. The polypeptide is Arginine--tRNA ligase (Methanosarcina mazei (strain ATCC BAA-159 / DSM 3647 / Goe1 / Go1 / JCM 11833 / OCM 88) (Methanosarcina frisia)).